The primary structure comprises 236 residues: 28 kDa antigen (236 aa).

An N-terminal signal peptide occupies residues M1–A22. Positions P76 to L105 are disordered. A compositionally biased stretch (polar residues) spans G94–L105.

To M.tuberculosis ERP.

The protein is 28 kDa antigen of Mycobacterium leprae (strain TN).